The sequence spans 181 residues: Acireductone dioxygenase (181 aa).

4 residues coordinate Fe(2+): His-97, His-99, Glu-103, and His-141. Ni(2+) is bound by residues His-97, His-99, Glu-103, and His-141.

Belongs to the acireductone dioxygenase (ARD) family. In terms of assembly, monomer. Fe(2+) serves as cofactor. Ni(2+) is required as a cofactor.

It carries out the reaction 1,2-dihydroxy-5-(methylsulfanyl)pent-1-en-3-one + O2 = 3-(methylsulfanyl)propanoate + CO + formate + 2 H(+). The catalysed reaction is 1,2-dihydroxy-5-(methylsulfanyl)pent-1-en-3-one + O2 = 4-methylsulfanyl-2-oxobutanoate + formate + 2 H(+). Its pathway is amino-acid biosynthesis; L-methionine biosynthesis via salvage pathway; L-methionine from S-methyl-5-thio-alpha-D-ribose 1-phosphate: step 5/6. Functionally, catalyzes 2 different reactions between oxygen and the acireductone 1,2-dihydroxy-3-keto-5-methylthiopentene (DHK-MTPene) depending upon the metal bound in the active site. Fe-containing acireductone dioxygenase (Fe-ARD) produces formate and 2-keto-4-methylthiobutyrate (KMTB), the alpha-ketoacid precursor of methionine in the methionine recycle pathway. Ni-containing acireductone dioxygenase (Ni-ARD) produces methylthiopropionate, carbon monoxide and formate, and does not lie on the methionine recycle pathway. The polypeptide is Acireductone dioxygenase (Pseudomonas aeruginosa (strain UCBPP-PA14)).